Consider the following 486-residue polypeptide: Cytochrome P450 monooxygenase aclC (486 aa).

C427 contacts heme.

The protein belongs to the cytochrome P450 family. Requires heme as cofactor.

It functions in the pathway mycotoxin biosynthesis. In terms of biological role, cytochrome P450 monooxygenase; part of the gene cluster that mediates the biosynthesis of aspirochlorine (or antibiotic A30641), an unusual halogenated spiro compound with distinctive antifungal properties due to selective inhibition of protein biosynthesis, and which is also active against bacteria, viruses, and murine tumor cells. The non-ribosomal peptide synthetase (NRPS) aclP is responsible the formation of the diketopiperazine (DKP) core from the condensation of 2 phenylalanine residues. One Phe residue is tailored into chlorotyrosine by hydroxylation and chlorination, whereas the second Phe undergoes an unprecedented C-C bond cleavage to be converted into glycine. After formation of the DKP, sulfur is incorporated into the DKP by conjugation with glutathione by aclG, followed by its stepwise degradation to the thiol by aclI, aclJ and aclK, and the dithiol oxidation by aclT. In addition, oxygenases (aclB, aclC, aclL and aclO) and O-methyltransferases (aclM and aclU) act as tailoring enzymes to produce the intermediate dechloroaspirochlorine. Ultimately, chlorination of dechloroaspirochlorine by the halogenase aclH is the last step in the aspirochlorine pathway. The sequence is that of Cytochrome P450 monooxygenase aclC from Aspergillus oryzae (strain ATCC 42149 / RIB 40) (Yellow koji mold).